Consider the following 245-residue polypeptide: MTLTASSSSRAVTNSPVVVALDYHNRDAAMAFIDKIDPRDCRLKVGKEMFTLFGPQFVRELQQRGFDIFLDLKFHDIPNTAAHAVAAAADLGVWMVNVHASGGARMMAAAREALVPFGKDAPLLIAVTVLTSMEASDLADLGVTLSPADYAERLAALTQKCGLDGVVCSAQEAVRFKQVFGQEFKLVTPGIRPQGSDAGDQRRIMTPEQALSAGVDYMVIGRPVTQSVDPAQTLKAINASLQRSA.

Residues Asp-22, Lys-44, 71-80, Thr-131, Arg-192, Gln-201, Gly-221, and Arg-222 contribute to the substrate site; that span reads DLKFHDIPNT. Catalysis depends on Lys-73, which acts as the Proton donor.

It belongs to the OMP decarboxylase family. Type 1 subfamily. In terms of assembly, homodimer.

The enzyme catalyses orotidine 5'-phosphate + H(+) = UMP + CO2. It participates in pyrimidine metabolism; UMP biosynthesis via de novo pathway; UMP from orotate: step 2/2. In terms of biological role, catalyzes the decarboxylation of orotidine 5'-monophosphate (OMP) to uridine 5'-monophosphate (UMP). This chain is Orotidine 5'-phosphate decarboxylase, found in Escherichia coli O127:H6 (strain E2348/69 / EPEC).